The sequence spans 118 residues: Large ribosomal subunit protein bL20 (118 aa).

It belongs to the bacterial ribosomal protein bL20 family.

Functionally, binds directly to 23S ribosomal RNA and is necessary for the in vitro assembly process of the 50S ribosomal subunit. It is not involved in the protein synthesizing functions of that subunit. The protein is Large ribosomal subunit protein bL20 of Yersinia enterocolitica serotype O:8 / biotype 1B (strain NCTC 13174 / 8081).